The sequence spans 422 residues: Adenylosuccinate synthetase (422 aa).

GTP contacts are provided by residues 12–18 and 40–42; these read GDEGKGK and GHT. Residue Asp13 is the Proton acceptor of the active site. Mg(2+) is bound by residues Asp13 and Gly40. IMP is bound by residues 13–16, 38–41, Thr129, Arg143, Asn221, Thr236, and Arg300; these read DEGK and NAGH. Catalysis depends on His41, which acts as the Proton donor. Substrate is bound at residue 296 to 302; that stretch reads VTTGRKR. Residues Arg302, 328 to 330, and 410 to 412 each bind GTP; these read KLD and GVG.

This sequence belongs to the adenylosuccinate synthetase family. Homodimer. Mg(2+) is required as a cofactor.

It is found in the cytoplasm. It carries out the reaction IMP + L-aspartate + GTP = N(6)-(1,2-dicarboxyethyl)-AMP + GDP + phosphate + 2 H(+). The protein operates within purine metabolism; AMP biosynthesis via de novo pathway; AMP from IMP: step 1/2. In terms of biological role, plays an important role in the de novo pathway and in the salvage pathway of purine nucleotide biosynthesis. Catalyzes the first committed step in the biosynthesis of AMP from IMP. This chain is Adenylosuccinate synthetase, found in Pyrenophora tritici-repentis (strain Pt-1C-BFP) (Wheat tan spot fungus).